The sequence spans 187 residues: dITP/XTP pyrophosphatase (187 aa).

7-12 (TGNKHK) contacts substrate. Positions 36 and 64 each coordinate Mg(2+). Aspartate 64 acts as the Proton acceptor in catalysis. Residues alanine 65, 140-143 (FAFD), lysine 163, and 168-169 (HR) contribute to the substrate site.

The protein belongs to the HAM1 NTPase family. As to quaternary structure, homodimer. It depends on Mg(2+) as a cofactor.

The enzyme catalyses XTP + H2O = XMP + diphosphate + H(+). It catalyses the reaction dITP + H2O = dIMP + diphosphate + H(+). The catalysed reaction is ITP + H2O = IMP + diphosphate + H(+). Its function is as follows. Pyrophosphatase that catalyzes the hydrolysis of nucleoside triphosphates to their monophosphate derivatives, with a high preference for the non-canonical purine nucleotides XTP (xanthosine triphosphate), dITP (deoxyinosine triphosphate) and ITP. Seems to function as a house-cleaning enzyme that removes non-canonical purine nucleotides from the nucleotide pool, thus preventing their incorporation into DNA/RNA and avoiding chromosomal lesions. The chain is dITP/XTP pyrophosphatase from Methanothermobacter marburgensis (strain ATCC BAA-927 / DSM 2133 / JCM 14651 / NBRC 100331 / OCM 82 / Marburg) (Methanobacterium thermoautotrophicum).